The chain runs to 140 residues: Large ribosomal subunit protein uL11 (140 aa).

The protein belongs to the universal ribosomal protein uL11 family. Part of the ribosomal stalk of the 50S ribosomal subunit. Interacts with L10 and the large rRNA to form the base of the stalk. L10 forms an elongated spine to which L12 dimers bind in a sequential fashion forming a multimeric L10(L12)X complex. Post-translationally, one or more lysine residues are methylated.

Its function is as follows. Forms part of the ribosomal stalk which helps the ribosome interact with GTP-bound translation factors. The polypeptide is Large ribosomal subunit protein uL11 (Oleidesulfovibrio alaskensis (strain ATCC BAA-1058 / DSM 17464 / G20) (Desulfovibrio alaskensis)).